A 455-amino-acid chain; its full sequence is Epoxide hydrolase 1 (455 aa).

A helical; Signal-anchor for type III membrane protein transmembrane segment spans residues Met1–Arg21. At Asp22–Gln455 the chain is on the cytoplasmic side. The active-site Nucleophile is Asp226. A Dimethylated arginine modification is found at Arg295. Tyr374 serves as the catalytic Proton donor. His431 (proton acceptor) is an active-site residue.

Belongs to the peptidase S33 family. As to expression, found in liver.

It localises to the microsome membrane. Its subcellular location is the endoplasmic reticulum membrane. It carries out the reaction cis-stilbene oxide + H2O = (1R,2R)-hydrobenzoin. The catalysed reaction is 1-(4-methoxyphenyl)-N-methyl-N-[(3-methyloxetan-3-yl)methyl]methanamine + H2O = 2-{[(4-methoxybenzyl)(methyl)amino]methyl}-2-methylpropane-1,3-diol. The enzyme catalyses 8,9-epoxy-(5Z,11Z,14Z)-eicosatrienoate + H2O = 8,9-dihydroxy-(5Z,11Z,14Z)-eicosatrienoate. It catalyses the reaction 11,12-epoxy-(5Z,8Z,14Z)-eicosatrienoate + H2O = 11,12-dihydroxy-(5Z,8Z,14Z)-eicosatrienoate. It carries out the reaction 2-(5Z,8Z,11Z,14Z-eicosatetraenoyl)-glycerol + H2O = glycerol + (5Z,8Z,11Z,14Z)-eicosatetraenoate + H(+). Its activity is regulated as follows. Inhibited by 10-hydroxystearamide and methoxy-arachidonyl fluorophosphate. Its function is as follows. Biotransformation enzyme that catalyzes the hydrolysis of arene and aliphatic epoxides to less reactive and more water soluble dihydrodiols by the trans addition of water. Plays a role in the metabolism of endogenous lipids such as epoxide-containing fatty acids. Metabolizes the abundant endocannabinoid 2-arachidonoylglycerol (2-AG) to free arachidonic acid (AA) and glycerol. Binds 20(S)-hydroxycholesterol (20(S)-OHC). The chain is Epoxide hydrolase 1 from Homo sapiens (Human).